A 389-amino-acid polypeptide reads, in one-letter code: Tyrosine aminotransferase (389 aa).

The residue at position 242 (K242) is an N6-(pyridoxal phosphate)lysine.

The protein belongs to the class-I pyridoxal-phosphate-dependent aminotransferase family. As to quaternary structure, homodimer. Pyridoxal 5'-phosphate serves as cofactor.

The catalysed reaction is L-tyrosine + 2-oxoglutarate = 3-(4-hydroxyphenyl)pyruvate + L-glutamate. The protein operates within amino-acid degradation; L-phenylalanine degradation; acetoacetate and fumarate from L-phenylalanine: step 2/6. In terms of biological role, transaminase involved in tyrosine breakdown. Converts tyrosine to p-hydroxyphenylpyruvate. The sequence is that of Tyrosine aminotransferase (tatA) from Rhizobium meliloti (strain 1021) (Ensifer meliloti).